We begin with the raw amino-acid sequence, 329 residues long: Catabolite control protein A (329 aa).

An HTH lacI-type domain is found at 1-57; sequence MTVTIYDVAREARVSMATVSRVVNGNQNVKPETRNKVNEVIKRLNYRPNAVARGLAS. Residues 5–24 constitute a DNA-binding region (H-T-H motif); that stretch reads IYDVAREARVSMATVSRVVN.

Its function is as follows. Global transcriptional regulator of carbon catabolite repression (CCR) and carbon catabolite activation (CCA), which ensures optimal energy usage under diverse conditions. The sequence is that of Catabolite control protein A (ccpA) from Staphylococcus epidermidis (strain ATCC 12228 / FDA PCI 1200).